Here is a 131-residue protein sequence, read N- to C-terminus: MAQSLALSLLILVLAFGIPGTQGSDGGAQDCCLKYSQRKIPAKVVRSYRKQEPSLGCSIPAILFLPRKRSQAELCADPKELWVQQLMQHLDKTPTPRKPVQGCRKDRGVPKNGKKGKGCKRTEQSQTPKGP.

A signal peptide spans 1-23; that stretch reads MAQSLALSLLILVLAFGIPGTQG. Cystine bridges form between cysteine 31-cysteine 57, cysteine 32-cysteine 75, and cysteine 103-cysteine 119. A disordered region spans residues 89-131; the sequence is HLDKTPTPRKPVQGCRKDRGVPKNGKKGKGCKRTEQSQTPKGP.

It belongs to the intercrine beta (chemokine CC) family. Monomer. Binds to CCR7. Interacts with PDPN; relocalizes PDPN to the basolateral membrane. Interacts with TNFAIP6 (via Link domain). Interacts with GPR174.

It localises to the secreted. In terms of biological role, inhibits hemopoiesis and stimulates chemotaxis. Chemotactic in vitro for thymocytes and activated T-cells, but not for B-cells, macrophages, or neutrophils. Shows preferential activity towards naive T-cells. May play a role in mediating homing of lymphocytes to secondary lymphoid organs. Binds to atypical chemokine receptor ACKR4 and mediates the recruitment of beta-arrestin (ARRB1/2) to ACKR4. This chain is C-C motif chemokine 21 (CCL21), found in Macaca mulatta (Rhesus macaque).